The primary structure comprises 413 residues: Serine hydroxymethyltransferase (413 aa).

Residues Leu-119 and 123–125 contribute to the (6S)-5,6,7,8-tetrahydrofolate site; that span reads GHL. Lys-228 carries the post-translational modification N6-(pyridoxal phosphate)lysine. Position 351–353 (351–353) interacts with (6S)-5,6,7,8-tetrahydrofolate; that stretch reads SPF.

It belongs to the SHMT family. Homodimer. The cofactor is pyridoxal 5'-phosphate.

The protein resides in the cytoplasm. It catalyses the reaction (6R)-5,10-methylene-5,6,7,8-tetrahydrofolate + glycine + H2O = (6S)-5,6,7,8-tetrahydrofolate + L-serine. It participates in one-carbon metabolism; tetrahydrofolate interconversion. The protein operates within amino-acid biosynthesis; glycine biosynthesis; glycine from L-serine: step 1/1. Functionally, catalyzes the reversible interconversion of serine and glycine with tetrahydrofolate (THF) serving as the one-carbon carrier. This reaction serves as the major source of one-carbon groups required for the biosynthesis of purines, thymidylate, methionine, and other important biomolecules. Also exhibits THF-independent aldolase activity toward beta-hydroxyamino acids, producing glycine and aldehydes, via a retro-aldol mechanism. In Clostridium botulinum (strain Okra / Type B1), this protein is Serine hydroxymethyltransferase.